A 342-amino-acid chain; its full sequence is S-adenosylmethionine:tRNA ribosyltransferase-isomerase (342 aa).

It belongs to the QueA family. Monomer.

Its subcellular location is the cytoplasm. The enzyme catalyses 7-aminomethyl-7-carbaguanosine(34) in tRNA + S-adenosyl-L-methionine = epoxyqueuosine(34) in tRNA + adenine + L-methionine + 2 H(+). The protein operates within tRNA modification; tRNA-queuosine biosynthesis. In terms of biological role, transfers and isomerizes the ribose moiety from AdoMet to the 7-aminomethyl group of 7-deazaguanine (preQ1-tRNA) to give epoxyqueuosine (oQ-tRNA). The sequence is that of S-adenosylmethionine:tRNA ribosyltransferase-isomerase from Brevibacillus brevis (strain 47 / JCM 6285 / NBRC 100599).